Here is a 357-residue protein sequence, read N- to C-terminus: Dihydroorotate dehydrogenase (quinone) (357 aa).

FMN-binding positions include 66–70 and threonine 90; that span reads AGFDK. Residue lysine 70 coordinates substrate. 115 to 119 contacts substrate; sequence NRMGF. The FMN site is built by asparagine 143 and asparagine 176. Asparagine 176 is a binding site for substrate. Catalysis depends on serine 179, which acts as the Nucleophile. Asparagine 181 is a substrate binding site. Residues lysine 212 and threonine 240 each contribute to the FMN site. Residue 241–242 participates in substrate binding; sequence NT. FMN is bound by residues glycine 264, glycine 293, and 314–315; that span reads YT.

It belongs to the dihydroorotate dehydrogenase family. Type 2 subfamily. As to quaternary structure, monomer. FMN serves as cofactor.

It localises to the cell membrane. The catalysed reaction is (S)-dihydroorotate + a quinone = orotate + a quinol. The protein operates within pyrimidine metabolism; UMP biosynthesis via de novo pathway; orotate from (S)-dihydroorotate (quinone route): step 1/1. Catalyzes the conversion of dihydroorotate to orotate with quinone as electron acceptor. The sequence is that of Dihydroorotate dehydrogenase (quinone) from Mycobacterium tuberculosis (strain ATCC 25177 / H37Ra).